The primary structure comprises 41 residues: Virescein (41 aa).

Position 41 is a histidine amide (His-41).

As to quaternary structure, monomer. In terms of tissue distribution, hemolymph.

It is found in the secreted. Functionally, has antibacterial activity against Gram-positive and Gram-negative bacteria. The protein is Virescein of Heliothis virescens (Tobacco budworm moth).